The following is an 89-amino-acid chain: Small ribosomal subunit protein uS15 (89 aa).

Belongs to the universal ribosomal protein uS15 family. As to quaternary structure, part of the 30S ribosomal subunit. Forms a bridge to the 50S subunit in the 70S ribosome, contacting the 23S rRNA.

Functionally, one of the primary rRNA binding proteins, it binds directly to 16S rRNA where it helps nucleate assembly of the platform of the 30S subunit by binding and bridging several RNA helices of the 16S rRNA. Forms an intersubunit bridge (bridge B4) with the 23S rRNA of the 50S subunit in the ribosome. This chain is Small ribosomal subunit protein uS15, found in Rhodospirillum centenum (strain ATCC 51521 / SW).